We begin with the raw amino-acid sequence, 691 residues long: DNA ligase (691 aa).

Residues Asp-41–Asp-45, Ser-90–Leu-91, and Glu-130 each bind NAD(+). Lys-132 (N6-AMP-lysine intermediate) is an active-site residue. NAD(+)-binding residues include Arg-153, Glu-190, Lys-307, and Lys-331. Positions 425, 428, 443, and 449 each coordinate Zn(2+). Residues Ala-610–Pro-691 enclose the BRCT domain.

It belongs to the NAD-dependent DNA ligase family. LigA subfamily. Mg(2+) is required as a cofactor. Requires Mn(2+) as cofactor.

It catalyses the reaction NAD(+) + (deoxyribonucleotide)n-3'-hydroxyl + 5'-phospho-(deoxyribonucleotide)m = (deoxyribonucleotide)n+m + AMP + beta-nicotinamide D-nucleotide.. Its function is as follows. DNA ligase that catalyzes the formation of phosphodiester linkages between 5'-phosphoryl and 3'-hydroxyl groups in double-stranded DNA using NAD as a coenzyme and as the energy source for the reaction. It is essential for DNA replication and repair of damaged DNA. This chain is DNA ligase, found in Burkholderia lata (strain ATCC 17760 / DSM 23089 / LMG 22485 / NCIMB 9086 / R18194 / 383).